Here is a 155-residue protein sequence, read N- to C-terminus: Protein-export protein SecB (155 aa).

The protein belongs to the SecB family. Homotetramer, a dimer of dimers. One homotetramer interacts with 1 SecA dimer.

The protein resides in the cytoplasm. Its function is as follows. One of the proteins required for the normal export of preproteins out of the cell cytoplasm. It is a molecular chaperone that binds to a subset of precursor proteins, maintaining them in a translocation-competent state. It also specifically binds to its receptor SecA. The polypeptide is Protein-export protein SecB (Escherichia coli O127:H6 (strain E2348/69 / EPEC)).